The primary structure comprises 288 residues: MAGAKEIRTKIASVKNTQKITKAMEMVATSKMRKTQERMAASRPYSETIRKVISHIAKGSIGYKHPFLTERDIKKVGYLVVSTDRGLCGGLNINLFKATLNEFKTWKDKDVSVELGLVGSKGVSFYQNLGLNVRSQVTGLGDNPEMERIVGAVNEMINAFRNGEVDAVYVAYNRFENTMTQKPVIAQLLPLPKLDDDELDTKGSWDYIYEPNPQVLLDSLLVRYLETQVYQAVVDNLASEQAARMVAMKAATDNAGTLIDELQLVYNKARQASITNELNEIVAGAAAI.

The protein belongs to the ATPase gamma chain family. F-type ATPases have 2 components, CF(1) - the catalytic core - and CF(0) - the membrane proton channel. CF(1) has five subunits: alpha(3), beta(3), gamma(1), delta(1), epsilon(1). CF(0) has three main subunits: a, b and c.

The protein resides in the cell inner membrane. Functionally, produces ATP from ADP in the presence of a proton gradient across the membrane. The gamma chain is believed to be important in regulating ATPase activity and the flow of protons through the CF(0) complex. This chain is ATP synthase gamma chain, found in Actinobacillus pleuropneumoniae serotype 3 (strain JL03).